The primary structure comprises 145 residues: Large ribosomal subunit protein uL11 (145 aa).

The protein belongs to the universal ribosomal protein uL11 family. As to quaternary structure, part of the ribosomal stalk of the 50S ribosomal subunit. Interacts with L10 and the large rRNA to form the base of the stalk. L10 forms an elongated spine to which L12 dimers bind in a sequential fashion forming a multimeric L10(L12)X complex. One or more lysine residues are methylated.

Functionally, forms part of the ribosomal stalk which helps the ribosome interact with GTP-bound translation factors. This chain is Large ribosomal subunit protein uL11, found in Rickettsia akari (strain Hartford).